Here is a 185-residue protein sequence, read N- to C-terminus: Elongation factor P (185 aa).

This sequence belongs to the elongation factor P family.

Its subcellular location is the cytoplasm. It participates in protein biosynthesis; polypeptide chain elongation. Functionally, involved in peptide bond synthesis. Stimulates efficient translation and peptide-bond synthesis on native or reconstituted 70S ribosomes in vitro. Probably functions indirectly by altering the affinity of the ribosome for aminoacyl-tRNA, thus increasing their reactivity as acceptors for peptidyl transferase. This chain is Elongation factor P, found in Thermosipho africanus (strain TCF52B).